Here is a 377-residue protein sequence, read N- to C-terminus: NADH dehydrogenase [ubiquinone] 1 alpha subcomplex subunit 9, mitochondrial (377 aa).

The N-terminal 35 residues, 1-35, are a transit peptide targeting the mitochondrion; sequence MAAAAQSRVVRVLSMSRSAITAIATSVCHGPPCRQ. K175 carries the post-translational modification N6-succinyllysine. 2 positions are modified to N6-acetyllysine: K189 and K370.

Belongs to the complex I NDUFA9 subunit family. In terms of assembly, complex I is composed of 45 different subunits. This a component of the hydrophobic protein fraction. Interacts with BLOC1S1. Interacts with SLC2A4. Interacts with CLOCK. Interacts with RAB5IF. It depends on FAD as a cofactor. In terms of processing, acetylated on lysine residues. BLOC1S1 is required for acetylation. Acetylated by CLOCK in a circadian manner.

It localises to the mitochondrion matrix. Functionally, accessory subunit of the mitochondrial membrane respiratory chain NADH dehydrogenase (Complex I), that is believed not to be involved in catalysis. Required for proper complex I assembly. Complex I functions in the transfer of electrons from NADH to the respiratory chain. The immediate electron acceptor for the enzyme is believed to be ubiquinone. This is NADH dehydrogenase [ubiquinone] 1 alpha subcomplex subunit 9, mitochondrial (NDUFA9) from Homo sapiens (Human).